Here is a 1275-residue protein sequence, read N- to C-terminus: Probable Rho-type GTPase-activating protein 2 (1275 aa).

4 disordered regions span residues 118–146 (KYESTDSFPSSQPSRANSPQSDSYSSPYE), 213–238 (NTKRSHRSSEEPGASSPVTSPILKDS), 280–306 (SSFRRPITKPTPFNSDSNISIDPKDNN), and 335–365 (SSPRRKSISIVKPHGISSPKHSTNNLSSKSG). A compositionally biased stretch (polar residues) spans 122–143 (TDSFPSSQPSRANSPQSDSYSS). 2 stretches are compositionally biased toward polar residues: residues 290–299 (TPFNSDSNIS) and 353–364 (PKHSTNNLSSKS). Position 388 is a phosphoserine (serine 388). Disordered stretches follow at residues 390–466 (IIEN…RSSF) and 539–561 (FSKSKSHNHHPSSQVEKSTSNSK). Polar residues-rich tracts occupy residues 450–466 (SLSLQKTGSSDTRRSSF) and 552–561 (QVEKSTSNSK). Residues 719–836 (HAQKEGVLLK…WLRAILRQVP (118 aa)) enclose the PH domain. Positions 957–971 (ADTRRNQDAPEKHVP) are enriched in basic and acidic residues. Disordered stretches follow at residues 957–988 (ADTRRNQDAPEKHVPVIEIQSSRPSLEKTDQS) and 1254–1275 (NGAQNESDSDVSDDNGEDNEFF). Positions 1065-1275 (LPLNEAVNIS…DDNGEDNEFF (211 aa)) constitute a Rho-GAP domain. Positions 1260-1275 (SDSDVSDDNGEDNEFF) are enriched in acidic residues.

It localises to the nucleus. Functionally, GTPase-activating protein for Rho-type proteins. This chain is Probable Rho-type GTPase-activating protein 2 (rga2), found in Schizosaccharomyces pombe (strain 972 / ATCC 24843) (Fission yeast).